The chain runs to 1093 residues: Receptor-mediated endocytosis protein 6 (1093 aa).

In terms of domain architecture, Ras-GAP spans 156 to 389; sequence LKIAQVVCNL…EMMDALLVEK (234 aa). 2 disordered regions span residues 547-610 and 643-669; these read DLEK…GGEQ and RSGSFVKPPPSGIPTSSSEQNLPDVAT. 2 stretches are compositionally biased toward polar residues: residues 568-577 and 584-598; these read IDFSSGSAET and DSTSVSPEPLTSTEE. Residues 955-1093 form the VPS9 domain; it reads HHRDKLLRGT…SAVEYIKTIL (139 aa).

Belongs to the GAPVD1 family. As to quaternary structure, interacts with GDP-bound rab-5. Interacts with alpha-adaptin.

It localises to the membrane. It is found in the cytoplasmic vesicle. Its subcellular location is the clathrin-coated vesicle. Functionally, acts both as a GTPase-activating protein (GAP) and a guanine nucleotide exchange factor (GEF), and participates in endocytosis. Acts by regulating the activation of rab-5 by exchanging bound GDP for free GTP at clathrin coated pits. The chain is Receptor-mediated endocytosis protein 6 (rme-6) from Caenorhabditis elegans.